The sequence spans 386 residues: MKAATQARIDDSPLAWLDAVQRQRHEAGLRRCLRPRPAVATELDLASNDYLGLSRHPAVIDGGVQALRIWGAGATGSRLVTGDTKLHQQFEAELAEFVGAAAGLLFSSGYTANLGAVVGLSGPGSLLVSDARSHASLVDACRLSRARVVVTPHRDVDAVDAALRSRDEQRAVVVTDSVFSADGSLAPVRELLEVCRRHGALLLVDEAHGLGVRGGGRGLLYELGLAGAPDVVMTTTLSKALGSQGGVVLGPTPVRAHLIDAARPFIFDTGLAPAAVGAARAALRVLQAEPWRPQAVLNHAGELARMCGVAAVPDSAMVSVILGEPESAVAAAAACLDAGVKVGCFRPPTVPAGTSRLRLTARASLNAGELELARRVLTDVLAVARR.

Arginine 31 lines the substrate pocket. 109–110 is a binding site for pyridoxal 5'-phosphate; it reads GY. Histidine 134 serves as a coordination point for substrate. Pyridoxal 5'-phosphate-binding positions include serine 180, 205 to 208, and 236 to 239; these read DEAH and TLSK. N6-(pyridoxal phosphate)lysine is present on lysine 239. Threonine 349 serves as a coordination point for substrate.

This sequence belongs to the class-II pyridoxal-phosphate-dependent aminotransferase family. BioF subfamily. In terms of assembly, homodimer. Pyridoxal 5'-phosphate is required as a cofactor.

It carries out the reaction 6-carboxyhexanoyl-[ACP] + L-alanine + H(+) = (8S)-8-amino-7-oxononanoate + holo-[ACP] + CO2. It participates in cofactor biosynthesis; biotin biosynthesis. In terms of biological role, catalyzes the decarboxylative condensation of pimeloyl-[acyl-carrier protein] and L-alanine to produce 8-amino-7-oxononanoate (AON), [acyl-carrier protein], and carbon dioxide. The sequence is that of 8-amino-7-oxononanoate synthase from Mycobacterium bovis (strain ATCC BAA-935 / AF2122/97).